Reading from the N-terminus, the 213-residue chain is Uridine kinase (213 aa).

13 to 20 (GASASGKS) serves as a coordination point for ATP.

The protein belongs to the uridine kinase family.

Its subcellular location is the cytoplasm. It carries out the reaction uridine + ATP = UMP + ADP + H(+). It catalyses the reaction cytidine + ATP = CMP + ADP + H(+). It functions in the pathway pyrimidine metabolism; CTP biosynthesis via salvage pathway; CTP from cytidine: step 1/3. It participates in pyrimidine metabolism; UMP biosynthesis via salvage pathway; UMP from uridine: step 1/1. The polypeptide is Uridine kinase (Haemophilus influenzae (strain PittEE)).